The following is a 406-amino-acid chain: NAC transcription factor NAM-1 (406 aa).

Residues Met1–Ala11 are compositionally biased toward polar residues. A disordered region spans residues Met1–Arg40. The NAC domain occupies Leu35–Lys204. Residues Val137–Ala210 mediate DNA binding.

The protein resides in the nucleus. Functionally, transcription factor of the NAC family associated with the grain protein content (GPC). Accelerates senescence and increases nutrient remobilization from leaves to developing grains. Sequences of 11 European varieties of H.vulgare tested belongs to the same haplotype while the sequence found in H.spontaneum, an ancestor of the cultivated H.vulgare which has a higher GPC, belongs to an other haplotype. The protein is NAC transcription factor NAM-1 (NAM-1) of Hordeum vulgare subsp. vulgare (Domesticated barley).